Here is a 407-residue protein sequence, read N- to C-terminus: Pyridinium-3,5-bisthiocarboxylic acid mononucleotide nickel insertion protein (407 aa).

The protein belongs to the LarC family.

It catalyses the reaction Ni(II)-pyridinium-3,5-bisthiocarboxylate mononucleotide = pyridinium-3,5-bisthiocarboxylate mononucleotide + Ni(2+). Involved in the biosynthesis of a nickel-pincer cofactor ((SCS)Ni(II) pincer complex). Binds Ni(2+), and functions in nickel delivery to pyridinium-3,5-bisthiocarboxylic acid mononucleotide (P2TMN), to form the mature cofactor. Is thus probably required for the activation of nickel-pincer cofactor-dependent enzymes. The sequence is that of Pyridinium-3,5-bisthiocarboxylic acid mononucleotide nickel insertion protein from Acetivibrio thermocellus (strain ATCC 27405 / DSM 1237 / JCM 9322 / NBRC 103400 / NCIMB 10682 / NRRL B-4536 / VPI 7372) (Clostridium thermocellum).